A 270-amino-acid polypeptide reads, in one-letter code: NAD(P)H-hydrate epimerase (270 aa).

In terms of domain architecture, YjeF N-terminal spans 25–234 (FQQLMDLMQN…DLLAPEAIYQ (210 aa)). Residue 73-77 (DNGGQ) coordinates (6S)-NADPHX. K(+)-binding residues include N74 and D144. (6S)-NADPHX is bound by residues 148–154 (GVGLYGH) and E177. Residue T180 participates in K(+) binding.

It belongs to the NnrE/AIBP family. K(+) is required as a cofactor.

The enzyme catalyses (6R)-NADHX = (6S)-NADHX. It catalyses the reaction (6R)-NADPHX = (6S)-NADPHX. Catalyzes the epimerization of the S- and R-forms of NAD(P)HX, a damaged form of NAD(P)H that is a result of enzymatic or heat-dependent hydration. This is a prerequisite for the S-specific NAD(P)H-hydrate dehydratase to allow the repair of both epimers of NAD(P)HX. The chain is NAD(P)H-hydrate epimerase from Legionella pneumophila serogroup 1 (strain 2300/99 Alcoy).